The primary structure comprises 252 residues: Oncostatin-M (252 aa).

The signal sequence occupies residues 1–25 (MGVLLTQRTLLSLVLALLFPSMASM). 2 disulfide bridges follow: C31/C152 and C74/C192. The N-linked (GlcNAc...) asparagine glycan is linked to N100. Disordered stretches follow at residues 162–184 (TAEP…ASDA) and 213–252 (GESP…QLPR). The N-linked (GlcNAc...) asparagine glycan is linked to N217. The segment covering 218-245 (RSRRHSPHQALRKGVRRTRPSRKGKRLM) has biased composition (basic residues). Positions 222 to 252 (HSPHQALRKGVRRTRPSRKGKRLMTRGQLPR) are excised as a propeptide.

It belongs to the LIF/OSM family. In terms of processing, propeptide processing is not important for receptor binding activity but may be important growth-inhibitory activity.

The protein localises to the secreted. In terms of biological role, growth regulator. Inhibits the proliferation of a number of tumor cell lines. Stimulates proliferation of AIDS-KS cells. It regulates cytokine production, including IL-6, G-CSF and GM-CSF from endothelial cells. Uses both type I OSM receptor (heterodimers composed of LIFR and IL6ST) and type II OSM receptor (heterodimers composed of OSMR and IL6ST). Involved in the maturation of fetal hepatocytes, thereby promoting liver development and regeneration. This Homo sapiens (Human) protein is Oncostatin-M (OSM).